The following is a 125-amino-acid chain: Small ribosomal subunit protein uS12c (125 aa).

A disordered region spans residues 104-125 (ASGVKDRKQGRSKYGGKRPKGD). Residues 113–125 (GRSKYGGKRPKGD) are compositionally biased toward basic residues.

Belongs to the universal ribosomal protein uS12 family. Part of the 30S ribosomal subunit.

The protein localises to the plastid. It is found in the chloroplast. Functionally, with S4 and S5 plays an important role in translational accuracy. Located at the interface of the 30S and 50S subunits. The sequence is that of Small ribosomal subunit protein uS12c (rps12) from Emiliania huxleyi (Coccolithophore).